A 4749-amino-acid polypeptide reads, in one-letter code: E3 ubiquitin-protein ligase MYCBP2 (4749 aa).

Disordered stretches follow at residues Asp87–Ser127, Ala170–Pro192, and Ala609–Lys628. Over residues Ser100–Arg124 the composition is skewed to basic residues. 4 positions are modified to phosphoserine: Ser127, Ser178, Ser181, and Ser183. RCC1 repeat units follow at residues Asp600–Lys655, Asn699–Pro755, Lys907–Glu957, Asn958–Asp1009, and Gln1011–Asp1066. Positions Ser899–Lys910 are enriched in basic residues. Positions Ser899–Thr928 are disordered. Basic and acidic residues predominate over residues His911–Ser924. The segment at Asn1235 to Leu1386 is PHR domain 1. The residue at position 1621 (Ser1621) is a Phosphoserine. The interval Asn1723 to Arg1881 is PHR domain 2. Cys1745 and Cys1860 form a disulfide bridge. The interval Ala2018 to Leu2544 is RAE1 binding. Disordered stretches follow at residues Lys2313–Ala2336 and Gln2780–Gly3084. One copy of the Filamin repeat lies at Ser2331–Lys2438. Residues Gln2780–Lys2803 show a composition bias toward polar residues. The span at Val2814–Gly2832 shows a compositional bias: basic and acidic residues. A Phosphoserine modification is found at Ser2841. A compositionally biased stretch (basic and acidic residues) spans Asp2847 to Ser2857. Residues Arg2858 to Gly2879 show a composition bias toward polar residues. A phosphoserine mark is found at Ser2859 and Ser2861. 2 stretches are compositionally biased toward low complexity: residues Ser2884 to Pro2894 and Ser2904 to Pro2917. Residues Ser2905 and Ser2911 each carry the phosphoserine modification. Residues Gln2918 to Pro2929 are compositionally biased toward polar residues. Residues Thr2932–Ser2943 show a composition bias toward basic and acidic residues. A phosphoserine mark is found at Ser2941, Ser2943, and Ser2992. The segment covering Cys3008 to Ser3021 has biased composition (polar residues). Basic and acidic residues-rich tracts occupy residues Gly3027 to Asn3037 and Pro3047 to Ala3056. Ser3057 carries the phosphoserine modification. Residues Ile3060–Lys3073 are compositionally biased toward basic residues. A phosphoserine mark is found at Ser3162, Ser3550, and Ser3577. The segment at Val3677–Thr3700 is disordered. The segment covering Asn3687–Thr3700 has biased composition (basic and acidic residues). Positions Phe3789 to Ala3967 constitute a DOC domain. The interval Ser3986–Glu4007 is disordered. Thr3992 carries the post-translational modification Phosphothreonine. Phosphoserine occurs at positions 4002 and 4003. Zn(2+)-binding residues include Cys4499, Cys4502, Cys4517, His4519, His4522, Cys4525, Cys4546, Cys4549, Cys4615, and Cys4618. The RING-type; atypical zinc-finger motif lies at Cys4499–Lys4550. Residues Tyr4610 to His4747 form a tandem cysteine domain region. The active site involves Cys4629. Positions 4646, 4649, 4658, 4661, 4670, 4673, and 4674 each coordinate Zn(2+). Cys4681 is an active-site residue. Zn(2+) contacts are provided by Cys4688, Cys4691, Cys4709, Cys4723, His4729, Cys4740, and Cys4743.

It belongs to the RING-Cys relay (RCR) family. Interacts with MYC. Interacts with TSC2 (tuberin) when TSC2 is in complex with TSC1 (hamartin). Interacts with FBXO45. Interacts with RAE1. Interacts with CPNE1 (via VWFA domain) and CPNE4 (via VWFA domain). Interacts with (sumoylated) RANGAP1; interaction with sumoylated RANGAP1 inhibits E3 ubiquitin-protein ligase activity and promotes MYCBP2 translocation to the nucleus. Interacts with RAN. Interacts with ATP13A2; the interaction inhibits the ubiquitination of TSC2 by MYCBP2. Interacts with USP11. Post-translationally, autoubiquitinated. In terms of tissue distribution, expression is mostly restricted to the nervous system, including expression in motor and sensory axons. During postnatal development, expression is particularly strong in the cerebellum, hippocampus and retina. Lower levels of expression are observed throughout the cerebral cortex.

Its subcellular location is the nucleus. The protein resides in the cell projection. The protein localises to the axon. It is found in the cytoplasm. It localises to the cytoskeleton. The enzyme catalyses [E2 ubiquitin-conjugating enzyme]-S-ubiquitinyl-L-cysteine + [acceptor protein]-L-threonine = [E2 ubiquitin-conjugating enzyme]-L-cysteine + [acceptor protein]-3-O-ubiquitinyl-L-threonine.. Its pathway is protein modification; protein ubiquitination. In terms of biological role, atypical E3 ubiquitin-protein ligase which specifically mediates ubiquitination of threonine and serine residues on target proteins, instead of ubiquitinating lysine residues. Shows esterification activity towards both threonine and serine, with a preference for threonine, and acts via two essential catalytic cysteine residues that relay ubiquitin to its substrate via thioester intermediates. Interacts with the E2 enzymes UBE2D1, UBE2D3, UBE2E1 and UBE2L3. Plays a key role in neural development, probably by mediating ubiquitination of threonine residues on target proteins. Involved in different processes such as regulation of neurite outgrowth, synaptic growth, synaptogenesis and axon degeneration. Required for the formation of major central nervous system axon tracts. Required for proper axon growth by regulating axon navigation and axon branching: acts by regulating the subcellular location and stability of MAP3K12/DLK. Required for proper localization of retinogeniculate projections but not for eye-specific segregation. Regulates axon guidance in the olfactory system. Involved in Wallerian axon degeneration, an evolutionarily conserved process that drives the loss of damaged axons: acts by promoting destabilization of NMNAT2, probably via ubiquitination of NMNAT2. Catalyzes ubiquitination of threonine and/or serine residues on NMNAT2, consequences of threonine and/or serine ubiquitination are however unknown. Regulates the internalization of TRPV1 in peripheral sensory neurons. May mediate ubiquitination and subsequent proteasomal degradation of TSC2/tuberin. Independently of the E3 ubiquitin-protein ligase activity, also acts as a guanosine exchange factor (GEF) for RAN in neurons of dorsal root ganglia. May function as a facilitator or regulator of transcriptional activation by MYC. Acts in concert with HUWE1 to regulate the circadian clock gene expression by promoting the lithium-induced ubiquination and degradation of NR1D1. This chain is E3 ubiquitin-protein ligase MYCBP2, found in Mus musculus (Mouse).